Consider the following 284-residue polypeptide: Genome polyprotein (284 aa).

2 disordered regions span residues 16-57 (HQAN…GTSG) and 255-284 (GISTQEENTERHTTEDVSPSMHTLLGGKNM). A compositionally biased stretch (polar residues) spans 35 to 44 (EQSSIQSNLS).

Belongs to the potyviridae genome polyprotein family. In terms of processing, genome polyprotein of potyviruses undergoes post-translational proteolytic processing by the main proteinase NIa-pro resulting in the production of at least ten individual proteins. The P1 proteinase and the HC-pro cleave only their respective C-termini autocatalytically. 6K1 is essential for proper proteolytic separation of P3 from CI.

It is found in the virion. It carries out the reaction RNA(n) + a ribonucleoside 5'-triphosphate = RNA(n+1) + diphosphate. In terms of biological role, an RNA-dependent RNA polymerase that plays an essential role in the virus replication. Its function is as follows. Involved in aphid transmission, cell-to-cell and systemis movement, encapsidation of the viral RNA and in the regulation of viral RNA amplification. In Capsicum (peppers), this protein is Genome polyprotein.